The following is a 181-amino-acid chain: MGRAREIGEGNSSSLREQRNLREKDRRMRMKHLFSILSSHVSPTRKLPVPHLIDQATSYMIQLKENVNYLKEKKRTLLQGELGNLYEGSFLLPKLSIRSRDSTIEMNLIMDLNMKRVMLHELVSIFEEEGAQVMSANLQNLNDRTTYTIIAQAIISRIGIDPSRIEERVRKIIYGYIYFEA.

The interval 1-22 is disordered; the sequence is MGRAREIGEGNSSSLREQRNLR. The bHLH domain maps to 14-63; sequence SLREQRNLREKDRRMRMKHLFSILSSHVSPTRKLPVPHLIDQATSYMIQL.

It belongs to the bHLH protein family.

It localises to the nucleus. The protein is Transcription factor bHLH167 of Arabidopsis thaliana (Mouse-ear cress).